The sequence spans 522 residues: 3'3'-cGAMP-specific phosphodiesterase 2 (522 aa).

One can recognise a Response regulatory domain in the interval 36 to 160 (CVLLVDDDEQ…QKLRTLLYSM (125 aa)). A 4-aspartylphosphate modification is found at Asp-91. An HD-GYP domain is found at 325 to 522 (LRETSKELVY…FIAIRASLPD (198 aa)). Residues His-382 and Asp-383 each contribute to the a divalent metal cation site. Lys-386 (proton donor) is an active-site residue. Positions 411, 437, 438, and 466 each coordinate a divalent metal cation.

As to quaternary structure, homodimer. Requires Mn(2+) as cofactor.

The catalysed reaction is 3',3'-cGAMP + H2O = 5'-pApG-3' + H(+). Phosphodiesterase (PDE) that catalyzes the hydrolysis of 3'3'-cyclic GMP-AMP (3'3'-cGAMP), leading to linear 5'-pApG. Counteracts the function of the 3'3'-cGAMP synthase DncV, and is involved in the modulation of intracellular 3'3'-cGAMP levels. Enhances bacterial chemotaxis and inhibits intestinal colonization in vivo. Thus exerts a crucial role in regulating bacterial infectivity through catalyzing 3'3'-cGAMP degradation. Is specific for 3'3'-cGAMP since it cannot degrade other cGAMP linkage isomers (3'2'-, 2'3'-, and 2'2'-cGAMPs). Is also able to hydrolyze c-di-GMP but not c-di-AMP. The sequence is that of 3'3'-cGAMP-specific phosphodiesterase 2 from Vibrio cholerae serotype O1 (strain ATCC 39315 / El Tor Inaba N16961).